Consider the following 457-residue polypeptide: Bifunctional protein GlmU (457 aa).

The segment at 1–227 (MTQLSVVILA…FMEVEGANNR (227 aa)) is pyrophosphorylase. Residues 9–12 (LAAG), Lys23, Gln74, 79–80 (GT), 101–103 (YGD), Gly138, Glu152, Asn167, and Asn225 contribute to the UDP-N-acetyl-alpha-D-glucosamine site. Asp103 provides a ligand contact to Mg(2+). Asn225 lines the Mg(2+) pocket. The tract at residues 228–248 (LQLAALERFYQKTQAEKLLLA) is linker. Residues 249-457 (GVRLIDPARF…QRPTKKKIAD (209 aa)) form an N-acetyltransferase region. Positions 331 and 349 each coordinate UDP-N-acetyl-alpha-D-glucosamine. His361 (proton acceptor) is an active-site residue. UDP-N-acetyl-alpha-D-glucosamine-binding residues include Tyr364 and Asn375. Residues Ala378, 384–385 (NY), Ser403, Ala421, and Arg438 each bind acetyl-CoA.

This sequence in the N-terminal section; belongs to the N-acetylglucosamine-1-phosphate uridyltransferase family. The protein in the C-terminal section; belongs to the transferase hexapeptide repeat family. In terms of assembly, homotrimer. Mg(2+) serves as cofactor.

The protein resides in the cytoplasm. It catalyses the reaction alpha-D-glucosamine 1-phosphate + acetyl-CoA = N-acetyl-alpha-D-glucosamine 1-phosphate + CoA + H(+). It carries out the reaction N-acetyl-alpha-D-glucosamine 1-phosphate + UTP + H(+) = UDP-N-acetyl-alpha-D-glucosamine + diphosphate. Its pathway is nucleotide-sugar biosynthesis; UDP-N-acetyl-alpha-D-glucosamine biosynthesis; N-acetyl-alpha-D-glucosamine 1-phosphate from alpha-D-glucosamine 6-phosphate (route II): step 2/2. It participates in nucleotide-sugar biosynthesis; UDP-N-acetyl-alpha-D-glucosamine biosynthesis; UDP-N-acetyl-alpha-D-glucosamine from N-acetyl-alpha-D-glucosamine 1-phosphate: step 1/1. The protein operates within bacterial outer membrane biogenesis; LPS lipid A biosynthesis. Functionally, catalyzes the last two sequential reactions in the de novo biosynthetic pathway for UDP-N-acetylglucosamine (UDP-GlcNAc). The C-terminal domain catalyzes the transfer of acetyl group from acetyl coenzyme A to glucosamine-1-phosphate (GlcN-1-P) to produce N-acetylglucosamine-1-phosphate (GlcNAc-1-P), which is converted into UDP-GlcNAc by the transfer of uridine 5-monophosphate (from uridine 5-triphosphate), a reaction catalyzed by the N-terminal domain. This is Bifunctional protein GlmU from Actinobacillus pleuropneumoniae serotype 5b (strain L20).